A 498-amino-acid polypeptide reads, in one-letter code: Lysine--tRNA ligase (498 aa).

The Mg(2+) site is built by Glu-411 and Glu-418.

Belongs to the class-II aminoacyl-tRNA synthetase family. Homodimer. It depends on Mg(2+) as a cofactor.

It localises to the cytoplasm. It carries out the reaction tRNA(Lys) + L-lysine + ATP = L-lysyl-tRNA(Lys) + AMP + diphosphate. This Enterococcus faecalis (strain ATCC 700802 / V583) protein is Lysine--tRNA ligase.